Reading from the N-terminus, the 407-residue chain is Arrestin domain-containing protein 2 (407 aa).

The protein belongs to the arrestin family. Interacts with WWP1 (via WW domains).

The sequence is that of Arrestin domain-containing protein 2 (ARRDC2) from Homo sapiens (Human).